A 257-amino-acid chain; its full sequence is tRNA pseudouridine synthase A (257 aa).

The active-site Nucleophile is Asp52. Tyr111 is a binding site for substrate.

It belongs to the tRNA pseudouridine synthase TruA family. In terms of assembly, homodimer.

It carries out the reaction uridine(38/39/40) in tRNA = pseudouridine(38/39/40) in tRNA. Its function is as follows. Formation of pseudouridine at positions 38, 39 and 40 in the anticodon stem and loop of transfer RNAs. The polypeptide is tRNA pseudouridine synthase A (Cereibacter sphaeroides (strain ATCC 17025 / ATH 2.4.3) (Rhodobacter sphaeroides)).